A 436-amino-acid polypeptide reads, in one-letter code: Serine--tRNA ligase (436 aa).

242–244 (TAE) provides a ligand contact to L-serine. 273–275 (RSE) serves as a coordination point for ATP. An L-serine-binding site is contributed by Glu296. 360 to 363 (EISS) serves as a coordination point for ATP. Ser395 provides a ligand contact to L-serine.

The protein belongs to the class-II aminoacyl-tRNA synthetase family. Type-1 seryl-tRNA synthetase subfamily. Homodimer. The tRNA molecule binds across the dimer.

It localises to the cytoplasm. It carries out the reaction tRNA(Ser) + L-serine + ATP = L-seryl-tRNA(Ser) + AMP + diphosphate + H(+). The enzyme catalyses tRNA(Sec) + L-serine + ATP = L-seryl-tRNA(Sec) + AMP + diphosphate + H(+). It functions in the pathway aminoacyl-tRNA biosynthesis; selenocysteinyl-tRNA(Sec) biosynthesis; L-seryl-tRNA(Sec) from L-serine and tRNA(Sec): step 1/1. In terms of biological role, catalyzes the attachment of serine to tRNA(Ser). Is also able to aminoacylate tRNA(Sec) with serine, to form the misacylated tRNA L-seryl-tRNA(Sec), which will be further converted into selenocysteinyl-tRNA(Sec). In Polynucleobacter asymbioticus (strain DSM 18221 / CIP 109841 / QLW-P1DMWA-1) (Polynucleobacter necessarius subsp. asymbioticus), this protein is Serine--tRNA ligase.